Here is a 581-residue protein sequence, read N- to C-terminus: Bestrophin-1 (581 aa).

The Cytoplasmic portion of the chain corresponds to 1-31; that stretch reads MTVTYSSQVANARLGSFSRLLLCWRGSIYKL. Ala-10 is a Ca(2+) binding site. Residues 32–51 traverse the membrane as a helical segment; it reads LYGEFLIFLLCYYIIRFIYR. Topologically, residues 52 to 60 are extracellular; sequence MALTDEQQV. The chain crosses the membrane as a helical span at residues 61–82; that stretch reads IFEKLTLYCDSYIQLIPISFVL. At 83–237 the chain is on the cytoplasmic side; it reads GFYVTLVVTR…DWISVPLVYT (155 aa). Residues 238–255 form a helical membrane-spanning segment; sequence QVVTVAVYSFFLACLVGR. The Extracellular segment spans residues 256–274; the sequence is QFLNPAKAYPGHEMDLVVP. A helical membrane pass occupies residues 275 to 288; that stretch reads LFTFLQFFFYAGWL. Residues 289–581 lie on the Cytoplasmic side of the membrane; the sequence is KVAEQLINPF…ALENRDEAHS (293 aa). Ca(2+)-binding residues include Gln-293, Asn-296, Asp-301, and Asp-304. Positions 416-440 are disordered; that stretch reads EGHFHEGHPKNLRGARLDSSDQEDS.

The protein belongs to the anion channel-forming bestrophin (TC 1.A.46) family. Calcium-sensitive chloride channel subfamily. As to quaternary structure, interacts with YWHAG; this interaction promotes the ligand-gated L-glutamate channel activity leading to the positive regulation of NMDA glutamate receptor activity through the L-glutamate secretion. Phosphorylated (in vitro). Post-translationally, dephosphorylated (in vitro) by PP2A.

It localises to the cell membrane. It is found in the basolateral cell membrane. The catalysed reaction is chloride(in) = chloride(out). It catalyses the reaction hydrogencarbonate(in) = hydrogencarbonate(out). It carries out the reaction 4-aminobutanoate(in) = 4-aminobutanoate(out). The enzyme catalyses L-glutamate(out) = L-glutamate(in). Ligand-gated anion channel that allows the movement of anions across cell membranes when activated by calcium (Ca2+). Allows the movement of chloride and hydrogencarbonate. Found in a partially open conformation leading to significantly smaller chloride movement. Upon F2R/PAR-1 activation, the sequestered calcium is released into the cytosol of astrocytes, leading to the (Ca2+)-dependent release of L-glutamate into the synaptic cleft that targets the neuronal postsynaptic GRIN2A/NMDAR receptor resulting in the synaptic plasticity regulation. Upon activation of the norepinephrine-alpha-1 adrenergic receptor signaling pathway, transports as well D-serine than L-glutamate in a (Ca2+)-dependent manner, leading to activation of adjacent NMDAR receptors and therefore regulates the heterosynaptic long-term depression and metaplasticity during initial memory acquisition. Releases the 4-aminobutanoate neurotransmitter in a (Ca2+)-dependent manner, and participates in its tonic release from cerebellar glial cells. This is Bestrophin-1 from Sus scrofa (Pig).